We begin with the raw amino-acid sequence, 328 residues long: Protein phosphatase 1 regulatory inhibitor subunit PPP1R7 homolog (328 aa).

LRR repeat units follow at residues 13 to 36, 37 to 59, 61 to 82, 86 to 110, 111 to 130, 131 to 153, 154 to 177, 179 to 196, 197 to 221, 223 to 240, 241 to 264, 266 to 287, and 289 to 312; these read IGDSNNVLDLTSYQLHSLDTVELP, PNLIELDLTANRLSGLDSRIAQL, TLKKLSLRQNLIDDSAVEPLSH, LSDLEELVLRDNKLAKVPDVSIFTK, LLVYDISFNEITSLEGISKA, SSTLKELYVSKNEVNKIMEIEHL, HNLQILELGSNRLRVMENLENFTK, EELWLGRNRIKVVNLCGL, KCIKKISLQSNRLTSMKGFEECVAL, ELYLSHNGISKMEGLSAL, VNLRVLDVSNNKLTSVDDIQNLTK, EDLWLNDNQIESLEAITEAVTG, and KEKLTTIYLENNPCAKSSDYVAAV.

As to quaternary structure, interacts with human protein phosphatase PPP1C.

Its function is as follows. Inhibitor of protein-phosphatase 1 (PP1). Binds to and inhibits PP1 activity. In Arabidopsis thaliana (Mouse-ear cress), this protein is Protein phosphatase 1 regulatory inhibitor subunit PPP1R7 homolog.